A 293-amino-acid polypeptide reads, in one-letter code: Phosphatidate cytidylyltransferase (293 aa).

Helical transmembrane passes span 6–26 (IISA…GGWY), 51–71 (IAPA…SATV), 73–93 (PHLT…YLLF), 97–117 (MATI…GYLP), 157–177 (LLVT…AYIM), 195–215 (VEGS…GAWY), 218–238 (WPYW…VSLL), and 273–293 (VFTA…LNNL).

This sequence belongs to the CDS family.

Its subcellular location is the cell membrane. It carries out the reaction a 1,2-diacyl-sn-glycero-3-phosphate + CTP + H(+) = a CDP-1,2-diacyl-sn-glycerol + diphosphate. Its pathway is phospholipid metabolism; CDP-diacylglycerol biosynthesis; CDP-diacylglycerol from sn-glycerol 3-phosphate: step 3/3. This Synechocystis sp. (strain ATCC 27184 / PCC 6803 / Kazusa) protein is Phosphatidate cytidylyltransferase (cdsA).